Consider the following 193-residue polypeptide: Leucyl/phenylalanyl-tRNA--protein transferase (193 aa).

The protein belongs to the L/F-transferase family.

The protein localises to the cytoplasm. It carries out the reaction N-terminal L-lysyl-[protein] + L-leucyl-tRNA(Leu) = N-terminal L-leucyl-L-lysyl-[protein] + tRNA(Leu) + H(+). It catalyses the reaction N-terminal L-arginyl-[protein] + L-leucyl-tRNA(Leu) = N-terminal L-leucyl-L-arginyl-[protein] + tRNA(Leu) + H(+). The enzyme catalyses L-phenylalanyl-tRNA(Phe) + an N-terminal L-alpha-aminoacyl-[protein] = an N-terminal L-phenylalanyl-L-alpha-aminoacyl-[protein] + tRNA(Phe). Its function is as follows. Functions in the N-end rule pathway of protein degradation where it conjugates Leu, Phe and, less efficiently, Met from aminoacyl-tRNAs to the N-termini of proteins containing an N-terminal arginine or lysine. The chain is Leucyl/phenylalanyl-tRNA--protein transferase from Gloeobacter violaceus (strain ATCC 29082 / PCC 7421).